The chain runs to 235 residues: uncharacterized protein (235 aa).

Residues 27-47 traverse the membrane as a helical segment; that stretch reads AMKLWSTWITLLILTFFCSEC. One can recognise a CX domain in the interval 124-185; the sequence is YFWGESKYVP…CCGYDCCSNS (62 aa). A helical membrane pass occupies residues 187–207; it reads IFTSIFSLLVILLIVSVLSIF.

The protein localises to the membrane. This is an uncharacterized protein from Caenorhabditis elegans.